The following is a 110-amino-acid chain: Large ribosomal subunit protein uL22 (110 aa).

The protein belongs to the universal ribosomal protein uL22 family. As to quaternary structure, part of the 50S ribosomal subunit.

Its function is as follows. This protein binds specifically to 23S rRNA; its binding is stimulated by other ribosomal proteins, e.g. L4, L17, and L20. It is important during the early stages of 50S assembly. It makes multiple contacts with different domains of the 23S rRNA in the assembled 50S subunit and ribosome. In terms of biological role, the globular domain of the protein is located near the polypeptide exit tunnel on the outside of the subunit, while an extended beta-hairpin is found that lines the wall of the exit tunnel in the center of the 70S ribosome. This is Large ribosomal subunit protein uL22 from Halorhodospira halophila (strain DSM 244 / SL1) (Ectothiorhodospira halophila (strain DSM 244 / SL1)).